The primary structure comprises 414 residues: NADH kinase POS5, mitochondrial (414 aa).

Belongs to the NAD kinase family.

Its subcellular location is the mitochondrion matrix. The catalysed reaction is NADH + ATP = ADP + NADPH + H(+). Functionally, phosphorylates both NADH and NAD(+), with a twofold preference for NADH. Anti-oxidant factor and key source of the cellular reductant NADPH. This Saccharomyces cerevisiae (strain ATCC 204508 / S288c) (Baker's yeast) protein is NADH kinase POS5, mitochondrial (POS5).